The sequence spans 630 residues: ATP-dependent zinc metalloprotease FtsH (630 aa).

Topologically, residues Met1–Asn7 are cytoplasmic. The chain crosses the membrane as a helical span at residues Ile8–Thr28. At Asp29–Trp111 the chain is on the periplasmic side. The helical transmembrane segment at Trp112–Ile132 threads the bilayer. The Cytoplasmic portion of the chain corresponds to Met133–Lys630. ATP is bound at residue Gly203–Thr210. His425 serves as a coordination point for Zn(2+). The active site involves Glu426. Positions 429 and 501 each coordinate Zn(2+). Positions Lys601–Lys630 are disordered. Acidic residues predominate over residues Leu608–Glu619. Residues Asn620 to Lys630 show a composition bias toward basic and acidic residues.

This sequence in the central section; belongs to the AAA ATPase family. The protein in the C-terminal section; belongs to the peptidase M41 family. Homohexamer. The cofactor is Zn(2+).

The protein localises to the cell inner membrane. Acts as a processive, ATP-dependent zinc metallopeptidase for both cytoplasmic and membrane proteins. Plays a role in the quality control of integral membrane proteins. The chain is ATP-dependent zinc metalloprotease FtsH from Halothermothrix orenii (strain H 168 / OCM 544 / DSM 9562).